The following is a 201-amino-acid chain: ATP-dependent Clp protease proteolytic subunit (201 aa).

Serine 98 (nucleophile) is an active-site residue. The active site involves histidine 123.

Belongs to the peptidase S14 family. Fourteen ClpP subunits assemble into 2 heptameric rings which stack back to back to give a disk-like structure with a central cavity, resembling the structure of eukaryotic proteasomes.

The protein localises to the cytoplasm. The catalysed reaction is Hydrolysis of proteins to small peptides in the presence of ATP and magnesium. alpha-casein is the usual test substrate. In the absence of ATP, only oligopeptides shorter than five residues are hydrolyzed (such as succinyl-Leu-Tyr-|-NHMec, and Leu-Tyr-Leu-|-Tyr-Trp, in which cleavage of the -Tyr-|-Leu- and -Tyr-|-Trp bonds also occurs).. Cleaves peptides in various proteins in a process that requires ATP hydrolysis. Has a chymotrypsin-like activity. Plays a major role in the degradation of misfolded proteins. The polypeptide is ATP-dependent Clp protease proteolytic subunit (Rickettsia conorii (strain ATCC VR-613 / Malish 7)).